Consider the following 334-residue polypeptide: GTP 3',8-cyclase (334 aa).

Residues 11–236 (GFNRKIDYLR…ESTESSMGPA (226 aa)) enclose the Radical SAM core domain. Arg-20 is a binding site for GTP. Residues Cys-27 and Cys-31 each coordinate [4Fe-4S] cluster. S-adenosyl-L-methionine is bound at residue Tyr-33. [4Fe-4S] cluster is bound at residue Cys-34. A GTP-binding site is contributed by Arg-69. Gly-73 is a binding site for S-adenosyl-L-methionine. Position 100 (Thr-100) interacts with GTP. Residue Ser-124 participates in S-adenosyl-L-methionine binding. Lys-161 provides a ligand contact to GTP. Met-195 lines the S-adenosyl-L-methionine pocket. [4Fe-4S] cluster-binding residues include Cys-260 and Cys-263. A GTP-binding site is contributed by 265 to 267 (RVR). Cys-277 serves as a coordination point for [4Fe-4S] cluster.

The protein belongs to the radical SAM superfamily. MoaA family. As to quaternary structure, monomer and homodimer. Requires [4Fe-4S] cluster as cofactor.

It carries out the reaction GTP + AH2 + S-adenosyl-L-methionine = (8S)-3',8-cyclo-7,8-dihydroguanosine 5'-triphosphate + 5'-deoxyadenosine + L-methionine + A + H(+). It functions in the pathway cofactor biosynthesis; molybdopterin biosynthesis. In terms of biological role, catalyzes the cyclization of GTP to (8S)-3',8-cyclo-7,8-dihydroguanosine 5'-triphosphate. This Pseudomonas putida (strain ATCC 47054 / DSM 6125 / CFBP 8728 / NCIMB 11950 / KT2440) protein is GTP 3',8-cyclase.